A 154-amino-acid polypeptide reads, in one-letter code: Endoribonuclease YbeY (154 aa).

Zn(2+) is bound by residues histidine 114, histidine 118, and histidine 124.

Belongs to the endoribonuclease YbeY family. Zn(2+) serves as cofactor.

It is found in the cytoplasm. Functionally, single strand-specific metallo-endoribonuclease involved in late-stage 70S ribosome quality control and in maturation of the 3' terminus of the 16S rRNA. The polypeptide is Endoribonuclease YbeY (Haemophilus influenzae (strain ATCC 51907 / DSM 11121 / KW20 / Rd)).